The sequence spans 347 residues: Aspartate-semialdehyde dehydrogenase (347 aa).

NADP(+) is bound by residues 10-13 and 37-38; these read TGMV and RS. Residue Arg-108 participates in phosphate binding. The Acyl-thioester intermediate role is filled by Cys-147. Gln-174 provides a ligand contact to substrate. 177–178 contacts NADP(+); the sequence is SG. Glu-200 is a substrate binding site. Lys-203 is a binding site for phosphate. Arg-233 lines the substrate pocket. His-240 (proton acceptor) is an active-site residue. Positions 276–299 are disordered; the sequence is APEKPVVVRDEENRPQPRMDRDMD. Residues 281–299 are compositionally biased toward basic and acidic residues; sequence VVVRDEENRPQPRMDRDMD. 327 to 328 provides a ligand contact to NADP(+); the sequence is NT.

It belongs to the aspartate-semialdehyde dehydrogenase family. In terms of assembly, homodimer.

It catalyses the reaction L-aspartate 4-semialdehyde + phosphate + NADP(+) = 4-phospho-L-aspartate + NADPH + H(+). The protein operates within amino-acid biosynthesis; L-lysine biosynthesis via DAP pathway; (S)-tetrahydrodipicolinate from L-aspartate: step 2/4. It participates in amino-acid biosynthesis; L-methionine biosynthesis via de novo pathway; L-homoserine from L-aspartate: step 2/3. Its pathway is amino-acid biosynthesis; L-threonine biosynthesis; L-threonine from L-aspartate: step 2/5. In terms of biological role, catalyzes the NADPH-dependent formation of L-aspartate-semialdehyde (L-ASA) by the reductive dephosphorylation of L-aspartyl-4-phosphate. The chain is Aspartate-semialdehyde dehydrogenase from Methanothermobacter thermautotrophicus (strain ATCC 29096 / DSM 1053 / JCM 10044 / NBRC 100330 / Delta H) (Methanobacterium thermoautotrophicum).